The chain runs to 201 residues: MSFAEKITGLLARPNQQQDPAGGPEAPWYLKYGSRLLGIVGAFFAILFGLWNVLSIITLSVSCLVAGIIQMIAGFVVMALEAPCCFVCIDQVNVMADKLDAKPMYFRAGLYCALAVPPIFMCFGLASLFGSGLIFATGVVYGMMALGKKASAADMRAAAQQTDYGGNAATSQAATTSDRAGIVNNAQPFSFTGAVGTDSNV.

The next 3 helical transmembrane spans lie at 37-57 (LGIV…LSII), 59-79 (LSVS…VVMA), and 103-120 (PMYF…PPIF).

Belongs to the calcium channel flower family. In terms of assembly, homomultimer. Associates with the dally/ magu complex.

The protein resides in the cell membrane. The protein localises to the cytoplasmic vesicle. Its subcellular location is the secretory vesicle. It is found in the synaptic vesicle membrane. It localises to the presynaptic cell membrane. The protein resides in the endosome. With respect to regulation, channel activity is inhibited by La(3+), which reduces Ca(2+) influx and thus inhibits it's function in promoting activity-dependent bulk endocytosis (ADBE) in response to high stimuli. Its function is as follows. Transmembrane protein which mediates synaptic endocytosis, fitness-based cell culling, neuronal culling, morphogen gradient scaling, and calcium transport. Regulates synaptic endocytosis and hence couples exo- with endocytosis. Controls two major modes of synaptic vesicle (SV) endocytosis in the synaptic boutons of neuromuscular junctions (NMJs); Ca(2+) channel-independent Clathrin-mediated endocytosis (CME) in response to mild stimulation, and Ca(2+) channel-dependent activity-dependent bulk endocytosis (ADBE) in response to strong stimulation. Functions in ADBE and subsequent SV reformation from bulk endosomes by initiating Ca(2+) channel-dependent phosphatidylinositol 4,5-bisphosphate (PtdIns(4,5)P2) compartmentalization in synaptic boutons. There it acts at the periactive zone to provide the low Ca(2+) levels required to initiate Calcineurin activation and upregulate PtdIns(4,5)P2. Conversely PtdIns(4,5)P2 enhances fwe Ca(2+) channel-activity, establishing a positive feedback loop that induces PtdIns(4,5)P2 microdomain at the periactive zone. These microdomains trigger bulk membrane invagination (i.e. ADBE) by triggering actin polymerization while also promoting localization of fwe to bulk endosomes, thereby removing the ADBE trigger to reduce endocytosis and prevent excess membrane uptake. PtdIns(4,5)P2 then promotes SV reformation from the bulk endosomes, to coordinate ADBE and subsequent SV reformation. Different combinations of the flower isoforms at the cell membrane are also required for the identification and elimination of suboptimal or supernumerary cells during development, regeneration, and adulthood. Required for the recognition and elimination of unfit cells in the developing wing during cell competition. In the developing pupal retina, mediates the elimination of unwanted postmitotic neurons, including supernumerary photoreceptor neurons that form at the periphery of the retina and are contained within incomplete ommatidia units. Also required for efficient elimination and replacement of old neurons by newly generated neurons during regeneration in the adult brain following mechanical injury. Downstream of the flower fitness fingerprints, cells identified as unwanted or unfit are eliminated via apoptosis through the expression of ahuizotl (azot). However, the cells marked for elimination by the flower isoforms only undergo apoptosis if additional thresholds are met; (1) their neighboring fit/healthy cells express different levels of the fwe isoforms, and (2) the levels of the protective signal SPARC expressed by the loser or unwanted cells are unable to inhibit caspase activation. These additional thresholds for flower-mediated apoptosis, allows useful cells to recover from transient and limited stress before they are unnecessarily eliminated. Functions with dally and magu in a mechanism of scaling, which utilises apoptosis to ensure that the dpp morphogen gradient, which mediates organ growth, remains proportional to the size of the growing wing. In this mechanism, fwe represses dally- and Magu-dependent activity in expanding the gradient, and dally/Magu inhibits fwe-dependent apoptosis to keep cell death rate low. When the levels of these different proteins are optimally regulated the gradient correctly scales with organ growth but when this fails, fwe-mediated apoptosis is activated to trim the developing tissue to match the correct size of the gradient. The polypeptide is Calcium channel flower (Drosophila willistoni (Fruit fly)).